We begin with the raw amino-acid sequence, 447 residues long: Probable glycine dehydrogenase (decarboxylating) subunit 1 (447 aa).

It belongs to the GcvP family. N-terminal subunit subfamily. In terms of assembly, the glycine cleavage system is composed of four proteins: P, T, L and H. In this organism, the P 'protein' is a heterodimer of two subunits.

It catalyses the reaction N(6)-[(R)-lipoyl]-L-lysyl-[glycine-cleavage complex H protein] + glycine + H(+) = N(6)-[(R)-S(8)-aminomethyldihydrolipoyl]-L-lysyl-[glycine-cleavage complex H protein] + CO2. Its function is as follows. The glycine cleavage system catalyzes the degradation of glycine. The P protein binds the alpha-amino group of glycine through its pyridoxal phosphate cofactor; CO(2) is released and the remaining methylamine moiety is then transferred to the lipoamide cofactor of the H protein. In Halalkalibacterium halodurans (strain ATCC BAA-125 / DSM 18197 / FERM 7344 / JCM 9153 / C-125) (Bacillus halodurans), this protein is Probable glycine dehydrogenase (decarboxylating) subunit 1.